A 322-amino-acid chain; its full sequence is Ferrochelatase (322 aa).

Residues histidine 194 and glutamate 275 each coordinate Fe cation.

It belongs to the ferrochelatase family.

It localises to the cytoplasm. The enzyme catalyses heme b + 2 H(+) = protoporphyrin IX + Fe(2+). It functions in the pathway porphyrin-containing compound metabolism; protoheme biosynthesis; protoheme from protoporphyrin-IX: step 1/1. Its function is as follows. Catalyzes the ferrous insertion into protoporphyrin IX. This Yersinia enterocolitica protein is Ferrochelatase.